The following is a 196-amino-acid chain: ATP-dependent Clp protease proteolytic subunit (196 aa).

Residue Ser-98 is the Nucleophile of the active site. The active site involves His-123.

Belongs to the peptidase S14 family. Fourteen ClpP subunits assemble into 2 heptameric rings which stack back to back to give a disk-like structure with a central cavity, resembling the structure of eukaryotic proteasomes.

The protein localises to the cytoplasm. The enzyme catalyses Hydrolysis of proteins to small peptides in the presence of ATP and magnesium. alpha-casein is the usual test substrate. In the absence of ATP, only oligopeptides shorter than five residues are hydrolyzed (such as succinyl-Leu-Tyr-|-NHMec, and Leu-Tyr-Leu-|-Tyr-Trp, in which cleavage of the -Tyr-|-Leu- and -Tyr-|-Trp bonds also occurs).. Functionally, cleaves peptides in various proteins in a process that requires ATP hydrolysis. Has a chymotrypsin-like activity. Plays a major role in the degradation of misfolded proteins. The chain is ATP-dependent Clp protease proteolytic subunit from Actinobacillus pleuropneumoniae serotype 7 (strain AP76).